The chain runs to 78 residues: Small ribosomal subunit protein bS18B (78 aa).

Belongs to the bacterial ribosomal protein bS18 family. Part of the 30S ribosomal subunit. Forms a tight heterodimer with protein bS6.

Its function is as follows. Binds as a heterodimer with protein bS6 to the central domain of the 16S rRNA, where it helps stabilize the platform of the 30S subunit. This Streptomyces griseus subsp. griseus (strain JCM 4626 / CBS 651.72 / NBRC 13350 / KCC S-0626 / ISP 5235) protein is Small ribosomal subunit protein bS18B.